The following is a 147-amino-acid chain: MTNTLKISLKPNEKIYINGAVIRVDRKVTIELMNDVQFLLESHVIQADQASTPLRQLYFIVQVMLINPAGADDAREMFRRSLPLLIASFEDAEICSALKQIDRMVGEDHIYEALKAIRSLYPLERRALGGNDDVPGAPRPLAVGARY.

This sequence belongs to the FlbT family.

Its function is as follows. Has a post-transcriptional repressor function in flagellum biogenesis. Associates with the 5'-UTR of fljK mRNA and promotes its degradation. This is Probable flagellum biosynthesis repressor protein FlbT from Mesorhizobium japonicum (strain LMG 29417 / CECT 9101 / MAFF 303099) (Mesorhizobium loti (strain MAFF 303099)).